The sequence spans 261 residues: 3-hydroxyacyl-CoA dehydrogenase type-2 (261 aa).

Ala-2 carries the N-acetylalanine modification. NAD(+) is bound by residues Ser-20, Leu-22, and Asp-41. At Lys-53 the chain carries N6-acetyllysine; alternate. Lys-53 is modified (N6-succinyllysine; alternate). Position 65 (Val-65) interacts with NAD(+). Lys-69 carries the post-translational modification N6-acetyllysine. An NAD(+)-binding site is contributed by Cys-91. Lys-99 and Lys-105 each carry N6-acetyllysine. Position 155 (Ser-155) interacts with substrate. 4 residues coordinate NAD(+): Tyr-168, Lys-172, Phe-201, and Thr-203. The active-site Proton acceptor is Tyr-168. An N6-acetyllysine; alternate modification is found at Lys-212. Lys-212 is modified (N6-succinyllysine; alternate).

The protein belongs to the short-chain dehydrogenases/reductases (SDR) family. Homotetramer. Component of mitochondrial ribonuclease P, a complex composed of TRMT10C/MRPP1, HSD17B10/MRPP2 and PRORP/MRPP3. Interacts with TRMT10C/MRPP1; forming the MRPP1-MRPP2 subcomplex of the mitochondrial ribonuclease P complex.

The protein resides in the mitochondrion. Its subcellular location is the mitochondrion matrix. The protein localises to the mitochondrion nucleoid. It carries out the reaction a (3S)-3-hydroxyacyl-CoA + NAD(+) = a 3-oxoacyl-CoA + NADH + H(+). It catalyses the reaction (2S,3S)-3-hydroxy-2-methylbutanoyl-CoA + NAD(+) = 2-methyl-3-oxobutanoyl-CoA + NADH + H(+). The catalysed reaction is testosterone + NAD(+) = androst-4-ene-3,17-dione + NADH + H(+). The enzyme catalyses 5alpha-androstane-3alpha,17beta-diol + NAD(+) = 17beta-hydroxy-5alpha-androstan-3-one + NADH + H(+). It carries out the reaction 17beta-estradiol + NAD(+) = estrone + NADH + H(+). It catalyses the reaction cholate + NAD(+) = 3alpha,12alpha-dihydroxy-7-oxo-5beta-cholanate + NADH + H(+). The catalysed reaction is (3S)-3-hydroxybutanoyl-CoA + NAD(+) = acetoacetyl-CoA + NADH + H(+). The enzyme catalyses (3S)-hydroxyoctanoyl-CoA + NAD(+) = 3-oxooctanoyl-CoA + NADH + H(+). It carries out the reaction (3S)-hydroxyhexadecanoyl-CoA + NAD(+) = 3-oxohexadecanoyl-CoA + NADH + H(+). It catalyses the reaction 17beta-hydroxy-5alpha-androstan-3-one + NAD(+) = 5alpha-androstan-3,17-dione + NADH + H(+). The catalysed reaction is 5alpha-pregnan-20beta-ol-3-one + NAD(+) = 5alpha-pregnane-3,20-dione + NADH + H(+). The enzyme catalyses 3alpha-hydroxy-5alpha-pregnan-20-one + NAD(+) = 5alpha-pregnane-3,20-dione + NADH + H(+). It carries out the reaction cortisone + NAD(+) = 17alpha-hydroxypregn-4-en-3,11,20-trione-21-al + NADH + H(+). It catalyses the reaction 11-dehydrocorticosterone + NAD(+) = pregn-4-ene-3,11,20,21-tetraone + NADH + H(+). The catalysed reaction is cortisol + NAD(+) = 11beta,17alpha-dihydroxypregn-4-ene-3,20,21-trione + NADH + H(+). The enzyme catalyses chenodeoxycholate + NAD(+) = 7-oxolithocholate + NADH + H(+). It carries out the reaction ursodeoxycholate + NAD(+) = 7-oxolithocholate + NADH + H(+). It catalyses the reaction 3beta,7beta-dihydroxy-5beta-cholan-24-oate + NAD(+) = 3beta-hydroxy-7-oxo-5beta-cholan-24-oate + NADH + H(+). It functions in the pathway amino-acid degradation; L-isoleucine degradation. Its pathway is lipid metabolism; fatty acid beta-oxidation. The protein operates within steroid metabolism. It participates in lipid metabolism; bile acid biosynthesis. In terms of biological role, mitochondrial dehydrogenase involved in pathways of fatty acid, branched-chain amino acid and steroid metabolism. Acts as (S)-3-hydroxyacyl-CoA dehydrogenase in mitochondrial fatty acid beta-oxidation, a major degradation pathway of fatty acids. Catalyzes the third step in the beta-oxidation cycle, namely the reversible conversion of (S)-3-hydroxyacyl-CoA to 3-ketoacyl-CoA. Preferentially accepts straight medium- and short-chain acyl-CoA substrates with highest efficiency for (3S)-hydroxybutanoyl-CoA. Acts as 3-hydroxy-2-methylbutyryl-CoA dehydrogenase in branched-chain amino acid catabolic pathway. Catalyzes the oxidation of 3-hydroxy-2-methylbutanoyl-CoA into 2-methyl-3-oxobutanoyl-CoA, a step in isoleucine degradation pathway. Has hydroxysteroid dehydrogenase activity toward steroid hormones and bile acids. Catalyzes the oxidation of 3alpha-, 17beta-, 20beta- and 21-hydroxysteroids and 7alpha- and 7beta-hydroxy bile acids. Oxidizes allopregnanolone/brexanolone at the 3alpha-hydroxyl group, which is known to be critical for the activation of gamma-aminobutyric acid receptors (GABAARs) chloride channel. Has phospholipase C-like activity toward cardiolipin and its oxidized species. Likely oxidizes the 2'-hydroxyl in the head group of cardiolipin to form a ketone intermediate that undergoes nucleophilic attack by water and fragments into diacylglycerol, dihydroxyacetone and orthophosphate. Has higher affinity for cardiolipin with oxidized fatty acids and may degrade these species during the oxidative stress response to protect cells from apoptosis. By interacting with intracellular amyloid-beta, it may contribute to the neuronal dysfunction associated with Alzheimer disease (AD). Essential for structural and functional integrity of mitochondria. In addition to mitochondrial dehydrogenase activity, moonlights as a component of mitochondrial ribonuclease P, a complex that cleaves tRNA molecules in their 5'-ends. Together with TRMT10C/MRPP1, forms a subcomplex of the mitochondrial ribonuclease P, named MRPP1-MRPP2 subcomplex, which displays functions that are independent of the ribonuclease P activity. The MRPP1-MRPP2 subcomplex catalyzes the formation of N(1)-methylguanine and N(1)-methyladenine at position 9 (m1G9 and m1A9, respectively) in tRNAs; HSD17B10/MRPP2 acting as a non-catalytic subunit. The MRPP1-MRPP2 subcomplex also acts as a tRNA maturation platform: following 5'-end cleavage by the mitochondrial ribonuclease P complex, the MRPP1-MRPP2 subcomplex enhances the efficiency of 3'-processing catalyzed by ELAC2, retains the tRNA product after ELAC2 processing and presents the nascent tRNA to the mitochondrial CCA tRNA nucleotidyltransferase TRNT1 enzyme. Associates with mitochondrial DNA complexes at the nucleoids to initiate RNA processing and ribosome assembly. This chain is 3-hydroxyacyl-CoA dehydrogenase type-2 (Hsd17b10), found in Rattus norvegicus (Rat).